Reading from the N-terminus, the 105-residue chain is uncharacterized protein (105 aa).

It is found in the cytoplasm. The protein resides in the nucleus. This is an uncharacterized protein from Schizosaccharomyces pombe (strain 972 / ATCC 24843) (Fission yeast).